The following is a 231-amino-acid chain: 2-C-methyl-D-erythritol 4-phosphate cytidylyltransferase (231 aa).

This sequence belongs to the IspD/TarI cytidylyltransferase family. IspD subfamily.

The enzyme catalyses 2-C-methyl-D-erythritol 4-phosphate + CTP + H(+) = 4-CDP-2-C-methyl-D-erythritol + diphosphate. The protein operates within isoprenoid biosynthesis; isopentenyl diphosphate biosynthesis via DXP pathway; isopentenyl diphosphate from 1-deoxy-D-xylulose 5-phosphate: step 2/6. Functionally, catalyzes the formation of 4-diphosphocytidyl-2-C-methyl-D-erythritol from CTP and 2-C-methyl-D-erythritol 4-phosphate (MEP). This chain is 2-C-methyl-D-erythritol 4-phosphate cytidylyltransferase, found in Bacillus licheniformis (strain ATCC 14580 / DSM 13 / JCM 2505 / CCUG 7422 / NBRC 12200 / NCIMB 9375 / NCTC 10341 / NRRL NRS-1264 / Gibson 46).